The primary structure comprises 569 residues: Probable protein phosphatase 2C BIPP2C1 (569 aa).

Disordered regions lie at residues 120–214 (EVSP…KVTG) and 251–279 (SLDDSEASDGSTTQDFDTDVETESSGSSI). Over residues 179–188 (ESERGSDADG) the composition is skewed to basic and acidic residues. Positions 329 to 564 (AAMLPHPSKV…DDVTVVVSVV (236 aa)) constitute a PPM-type phosphatase domain. 4 residues coordinate Mn(2+): Asp-358, Gly-359, Asp-488, and Asp-555.

It belongs to the PP2C family. Mg(2+) serves as cofactor. Mn(2+) is required as a cofactor.

It carries out the reaction O-phospho-L-seryl-[protein] + H2O = L-seryl-[protein] + phosphate. It catalyses the reaction O-phospho-L-threonyl-[protein] + H2O = L-threonyl-[protein] + phosphate. In terms of biological role, may play a role in responses to biotic and abiotic stresses. This is Probable protein phosphatase 2C BIPP2C1 (BIPP2C1) from Oryza sativa subsp. japonica (Rice).